The primary structure comprises 69 residues: Conotoxin Eb6.20 (69 aa).

Residues 1-17 form the signal peptide; the sequence is VLIIAVLFLTACQLTTA. Residues 18-41 constitute a propeptide that is removed on maturation; the sequence is ETYSRGRQKHRARRSTDKNSKWTR. 3 disulfides stabilise this stretch: Cys-43–Cys-57, Cys-50–Cys-61, and Cys-56–Cys-68.

This sequence belongs to the conotoxin O1 superfamily. Expressed by the venom duct.

It localises to the secreted. This Conus ebraeus (Hebrew cone) protein is Conotoxin Eb6.20 (E1).